The sequence spans 187 residues: Putative manganese efflux pump MntP (187 aa).

6 helical membrane passes run 3-23 (FYSL…VSLC), 35-55 (HYLI…TIGY), 56-76 (FIGI…AFIL), 107-127 (LALA…FAFL), 129-149 (VNLL…CIIA), and 166-186 (LLGG…HLFF).

The protein belongs to the MntP (TC 9.B.29) family.

It localises to the cell inner membrane. Probably functions as a manganese efflux pump. This is Putative manganese efflux pump MntP from Campylobacter jejuni (strain RM1221).